We begin with the raw amino-acid sequence, 58 residues long: uncharacterized protein (58 aa).

4Fe-4S ferredoxin-type domains lie at 2 to 27 (GIKI…IKTY) and 28 to 57 (GVAI…VDTS). 8 residues coordinate [4Fe-4S] cluster: cysteine 9, cysteine 12, cysteine 15, cysteine 19, cysteine 37, cysteine 40, cysteine 43, and cysteine 47.

[4Fe-4S] cluster serves as cofactor.

Its function is as follows. Ferredoxins are iron-sulfur proteins that transfer electrons probably in the CO-dehydrogenase complex. This is an uncharacterized protein from Methanocaldococcus jannaschii (strain ATCC 43067 / DSM 2661 / JAL-1 / JCM 10045 / NBRC 100440) (Methanococcus jannaschii).